The chain runs to 515 residues: Bifunctional solanapyrone synthase (515 aa).

The first 25 residues, 1-25 (MRLIILNLLSLGITPSVVGHSGPHR), serve as a signal peptide directing secretion. N-linked (GlcNAc...) asparagine glycosylation occurs at Asn-66. The FAD-binding PCMH-type domain maps to 91 to 261 (APKNPACIYT…THIVQRTYPL (171 aa)). Pros-8alpha-FAD histidine is present on His-128. Asn-274 and Asn-355 each carry an N-linked (GlcNAc...) asparagine glycan.

This sequence belongs to the oxygen-dependent FAD-linked oxidoreductase family. It depends on FAD as a cofactor.

It catalyses the reaction prosolanapyrone II + O2 = prosolanapyrone III + H2O2. The catalysed reaction is prosolanapyrone III = (-)-solanapyrone A. It carries out the reaction prosolanapyrone III = solanapyrone D. Its pathway is phytotoxin biosynthesis. Its function is as follows. Bifunctional solanapyrone synthase; part of the gene cluster that mediates the biosynthesis of the phytotoxin solanapyrone, a causal agent of early blight disease of potato and tomato. The prosolanapyrone synthase sol1 is a polyketide synthase that produces the octaketide desmethylprosolanapyrone I via sequential condensations of 7 malonyl-CoA units with one acetyl-CoA unit, and one methylation step. The octaketide backbone is further methylated by the sol2 O-methyltransferase to yield prosolanapyrone I. Prosolanapyrone I is hydroxylated to prosolanapyrone II by the cytochrome P450 monooxygenase sol6. The solanapyrone synthase sol5 then catalyzes the oxidation of prosolanapyrone II and the subsequent Diels Alder cycloisomerization of the product prosolanapyrone III to solanapyrones A and D. Solanapyrones A and D are then converted into solanapyrones B and E, respectively, by the sol3 dehydrogenase. The sequence is that of Bifunctional solanapyrone synthase (sol5) from Alternaria solani.